The sequence spans 331 residues: Lipoyl synthase (331 aa).

Positions 57, 62, 68, 83, 87, 90, and 294 each coordinate [4Fe-4S] cluster. The 215-residue stretch at 69 to 283 folds into the Radical SAM core domain; sequence WEDREATFLI…KAEAEAIGFL (215 aa).

Belongs to the radical SAM superfamily. Lipoyl synthase family. [4Fe-4S] cluster is required as a cofactor.

Its subcellular location is the cytoplasm. The enzyme catalyses [[Fe-S] cluster scaffold protein carrying a second [4Fe-4S](2+) cluster] + N(6)-octanoyl-L-lysyl-[protein] + 2 oxidized [2Fe-2S]-[ferredoxin] + 2 S-adenosyl-L-methionine + 4 H(+) = [[Fe-S] cluster scaffold protein] + N(6)-[(R)-dihydrolipoyl]-L-lysyl-[protein] + 4 Fe(3+) + 2 hydrogen sulfide + 2 5'-deoxyadenosine + 2 L-methionine + 2 reduced [2Fe-2S]-[ferredoxin]. It functions in the pathway protein modification; protein lipoylation via endogenous pathway; protein N(6)-(lipoyl)lysine from octanoyl-[acyl-carrier-protein]: step 2/2. In terms of biological role, catalyzes the radical-mediated insertion of two sulfur atoms into the C-6 and C-8 positions of the octanoyl moiety bound to the lipoyl domains of lipoate-dependent enzymes, thereby converting the octanoylated domains into lipoylated derivatives. The protein is Lipoyl synthase of Clavibacter michiganensis subsp. michiganensis (strain NCPPB 382).